A 453-amino-acid polypeptide reads, in one-letter code: Kynureninase (453 aa).

Pyridoxal 5'-phosphate is bound by residues leucine 114, threonine 115, 142–145 (FPSD), aspartate 232, histidine 235, and tyrosine 257. Lysine 258 bears the N6-(pyridoxal phosphate)lysine mark. Tryptophan 286 lines the pyridoxal 5'-phosphate pocket.

The protein belongs to the kynureninase family. In terms of assembly, homodimer. Pyridoxal 5'-phosphate is required as a cofactor.

Its subcellular location is the cytoplasm. It carries out the reaction L-kynurenine + H2O = anthranilate + L-alanine + H(+). It catalyses the reaction 3-hydroxy-L-kynurenine + H2O = 3-hydroxyanthranilate + L-alanine + H(+). Its pathway is amino-acid degradation; L-kynurenine degradation; L-alanine and anthranilate from L-kynurenine: step 1/1. It participates in cofactor biosynthesis; NAD(+) biosynthesis; quinolinate from L-kynurenine: step 2/3. Its function is as follows. Catalyzes the cleavage of L-kynurenine (L-Kyn) and L-3-hydroxykynurenine (L-3OHKyn) into anthranilic acid (AA) and 3-hydroxyanthranilic acid (3-OHAA), respectively. This Cryptococcus neoformans var. neoformans serotype D (strain B-3501A) (Filobasidiella neoformans) protein is Kynureninase.